The following is a 412-amino-acid chain: Cytochrome P450-SOY (412 aa).

Residues 1–25 (MTESTTDPARQNLDPTSPAPATSFP) are compositionally biased toward polar residues. Residues 1–38 (MTESTTDPARQNLDPTSPAPATSFPQDRGCPYHPPAGY) are disordered. Cys361 is a heme binding site.

This sequence belongs to the cytochrome P450 family. Requires heme as cofactor.

It is found in the cytoplasm. This Streptomyces griseus protein is Cytochrome P450-SOY (cyp105D1).